The primary structure comprises 135 residues: uncharacterized protein (135 aa).

The region spanning Q13–I129 is the Response regulatory domain. 4-aspartylphosphate is present on D64.

This is an uncharacterized protein from Leptospira interrogans serogroup Icterohaemorrhagiae serovar copenhageni (strain Fiocruz L1-130).